Consider the following 624-residue polypeptide: Phosphomethylpyrimidine synthase (624 aa).

A disordered region spans residues 40–61 (VPMRKISQSDTPTNTGREKNPP). The span at 45–54 (ISQSDTPTNT) shows a compositional bias: polar residues. Substrate contacts are provided by residues Asn-229, Met-258, Tyr-287, His-323, 343 to 345 (SRG), 384 to 387 (DGLR), and Glu-423. His-427 is a Zn(2+) binding site. Tyr-450 is a binding site for substrate. His-491 lines the Zn(2+) pocket. Positions 571, 574, and 579 each coordinate [4Fe-4S] cluster.

Belongs to the ThiC family. As to quaternary structure, homodimer. [4Fe-4S] cluster is required as a cofactor.

It carries out the reaction 5-amino-1-(5-phospho-beta-D-ribosyl)imidazole + S-adenosyl-L-methionine = 4-amino-2-methyl-5-(phosphooxymethyl)pyrimidine + CO + 5'-deoxyadenosine + formate + L-methionine + 3 H(+). The protein operates within cofactor biosynthesis; thiamine diphosphate biosynthesis. In terms of biological role, catalyzes the synthesis of the hydroxymethylpyrimidine phosphate (HMP-P) moiety of thiamine from aminoimidazole ribotide (AIR) in a radical S-adenosyl-L-methionine (SAM)-dependent reaction. In Methylococcus capsulatus (strain ATCC 33009 / NCIMB 11132 / Bath), this protein is Phosphomethylpyrimidine synthase.